The following is a 409-amino-acid chain: Dual-specificity RNA methyltransferase RlmN (409 aa).

Residue Glu121 is the Proton acceptor of the active site. In terms of domain architecture, Radical SAM core spans 127–376 (EEGRGTLCIS…IRTPRGRDIL (250 aa)). Cysteines 134 and 379 form a disulfide. Positions 141, 145, and 148 each coordinate [4Fe-4S] cluster. Residues 205-206 (GE), Ser237, 259-261 (SLH), and Asn336 each bind S-adenosyl-L-methionine. Cys379 serves as the catalytic S-methylcysteine intermediate.

This sequence belongs to the radical SAM superfamily. RlmN family. Requires [4Fe-4S] cluster as cofactor.

It is found in the cytoplasm. The enzyme catalyses adenosine(2503) in 23S rRNA + 2 reduced [2Fe-2S]-[ferredoxin] + 2 S-adenosyl-L-methionine = 2-methyladenosine(2503) in 23S rRNA + 5'-deoxyadenosine + L-methionine + 2 oxidized [2Fe-2S]-[ferredoxin] + S-adenosyl-L-homocysteine. It carries out the reaction adenosine(37) in tRNA + 2 reduced [2Fe-2S]-[ferredoxin] + 2 S-adenosyl-L-methionine = 2-methyladenosine(37) in tRNA + 5'-deoxyadenosine + L-methionine + 2 oxidized [2Fe-2S]-[ferredoxin] + S-adenosyl-L-homocysteine. Specifically methylates position 2 of adenine 2503 in 23S rRNA and position 2 of adenine 37 in tRNAs. m2A2503 modification seems to play a crucial role in the proofreading step occurring at the peptidyl transferase center and thus would serve to optimize ribosomal fidelity. In Agrobacterium fabrum (strain C58 / ATCC 33970) (Agrobacterium tumefaciens (strain C58)), this protein is Dual-specificity RNA methyltransferase RlmN.